The sequence spans 72 residues: Large ribosomal subunit protein bL31 (72 aa).

Residues Cys-16, Cys-18, Cys-38, and Cys-41 each contribute to the Zn(2+) site.

It belongs to the bacterial ribosomal protein bL31 family. Type A subfamily. As to quaternary structure, part of the 50S ribosomal subunit. It depends on Zn(2+) as a cofactor.

In terms of biological role, binds the 23S rRNA. This Aliivibrio fischeri (strain ATCC 700601 / ES114) (Vibrio fischeri) protein is Large ribosomal subunit protein bL31.